The sequence spans 75 residues: 8.9 kDa basic protein (75 aa).

This Orgyia pseudotsugata (Douglas-fir tussock moth) protein is 8.9 kDa basic protein (P8.9).